Consider the following 529-residue polypeptide: Pre-rRNA-processing protein pro-1 (529 aa).

WD repeat units follow at residues 136 to 175 (AHYQNITKIVISDDDSMIFTASKDGAVHGYLVTDLVSADR) and 287 to 326 (GHSDEISRLAINTDGTLLASGDASGKYCIWEISSHQCLKV). The stretch at 416–518 (ARNEAAKAEK…LKEINKQMYE (103 aa)) forms a coiled coil. The segment at 436 to 470 (TLGDDEDDAPEVGNQRRKSGKKNKKNRKNQKKNDF) is disordered. A compositionally biased stretch (basic residues) spans 450 to 465 (QRRKSGKKNKKNRKNQ).

The protein belongs to the WD repeat IPI3/WDR18 family. In terms of assembly, component of the PELP1 complex, composed of at least PELP1, TEX10 and WDR18. The complex interacts with pre-60S ribosome particles.

It localises to the nucleus. It is found in the nucleolus. The protein localises to the nucleoplasm. In terms of biological role, component of the PELP1 complex involved in the nucleolar steps of 28S rRNA maturation and the subsequent nucleoplasmic transit of the pre-60S ribosomal subunit. Required for processing ITS2 sequences from rRNA intermediates during 26S rRNA maturation. Required in the soma to promote normal proliferation and prevent germline tumor formation. The sequence is that of Pre-rRNA-processing protein pro-1 from Caenorhabditis elegans.